Consider the following 254-residue polypeptide: Persulfide dioxygenase ETHE1, mitochondrial (254 aa).

The transit peptide at 1–7 (MASAVVR) directs the protein to the mitochondrion. Phosphoserine is present on residues S14, S17, and S19. K32 is modified (N6-acetyllysine; alternate). N6-succinyllysine; alternate is present on K32. Position 66 is an N6-acetyllysine (K66). Positions 79, 135, and 154 each coordinate Fe cation. K172 bears the N6-acetyllysine; alternate mark. An N6-succinyllysine; alternate modification is found at K172.

It belongs to the metallo-beta-lactamase superfamily. Glyoxalase II family. In terms of assembly, homodimer. Monomer. Interacts with TST. May interact with RELA. It depends on Fe(2+) as a cofactor.

The protein resides in the cytoplasm. Its subcellular location is the nucleus. It is found in the mitochondrion matrix. The enzyme catalyses S-sulfanylglutathione + O2 + H2O = sulfite + glutathione + 2 H(+). First described as a protein that can shuttle between the nucleus and the cytoplasm and suppress p53-induced apoptosis by sequestering the transcription factor RELA/NFKB3 in the cytoplasm and preventing its accumulation in the nucleus. Sulfur dioxygenase that plays an essential role in hydrogen sulfide catabolism in the mitochondrial matrix. Hydrogen sulfide (H(2)S) is first oxidized by SQRDL, giving rise to cysteine persulfide residues. ETHE1 consumes molecular oxygen to catalyze the oxidation of the persulfide, once it has been transferred to a thiophilic acceptor, such as glutathione (R-SSH). Plays an important role in metabolic homeostasis in mitochondria by metabolizing hydrogen sulfide and preventing the accumulation of supraphysiological H(2)S levels that have toxic effects, due to the inhibition of cytochrome c oxidase. This Mus musculus (Mouse) protein is Persulfide dioxygenase ETHE1, mitochondrial (Ethe1).